A 513-amino-acid polypeptide reads, in one-letter code: Glutamyl-tRNA(Gln) amidotransferase subunit B, mitochondrial (513 aa).

It belongs to the GatB/GatE family. GatB subfamily. In terms of assembly, subunit of the heterotrimeric GatFAB amidotransferase (AdT) complex, composed of A, B and F subunits.

It localises to the mitochondrion. The enzyme catalyses L-glutamyl-tRNA(Gln) + L-glutamine + ATP + H2O = L-glutaminyl-tRNA(Gln) + L-glutamate + ADP + phosphate + H(+). Allows the formation of correctly charged Gln-tRNA(Gln) through the transamidation of misacylated Glu-tRNA(Gln) in the mitochondria. The reaction takes place in the presence of glutamine and ATP through an activated gamma-phospho-Glu-tRNA(Gln). The protein is Glutamyl-tRNA(Gln) amidotransferase subunit B, mitochondrial of Debaryomyces hansenii (strain ATCC 36239 / CBS 767 / BCRC 21394 / JCM 1990 / NBRC 0083 / IGC 2968) (Yeast).